Reading from the N-terminus, the 659-residue chain is UvrABC system protein B (659 aa).

The Helicase ATP-binding domain maps to 25–182 (QSIENGNRGQ…KKLIEIQYER (158 aa)). An ATP-binding site is contributed by 38-45 (GVTGSGKT). The Beta-hairpin motif lies at 91 to 114 (YYDYYQPEAYVPQTDTFIEKDASI). One can recognise a Helicase C-terminal domain in the interval 429–582 (QIDDLYGEIQ…QMEYNEEHNI (154 aa)). The 36-residue stretch at 622 to 657 (EKLIEQYEEEMKEAAKNLQFERAAELRDIIKDLKEN) folds into the UVR domain.

This sequence belongs to the UvrB family. In terms of assembly, forms a heterotetramer with UvrA during the search for lesions. Interacts with UvrC in an incision complex.

Its subcellular location is the cytoplasm. The UvrABC repair system catalyzes the recognition and processing of DNA lesions. A damage recognition complex composed of 2 UvrA and 2 UvrB subunits scans DNA for abnormalities. Upon binding of the UvrA(2)B(2) complex to a putative damaged site, the DNA wraps around one UvrB monomer. DNA wrap is dependent on ATP binding by UvrB and probably causes local melting of the DNA helix, facilitating insertion of UvrB beta-hairpin between the DNA strands. Then UvrB probes one DNA strand for the presence of a lesion. If a lesion is found the UvrA subunits dissociate and the UvrB-DNA preincision complex is formed. This complex is subsequently bound by UvrC and the second UvrB is released. If no lesion is found, the DNA wraps around the other UvrB subunit that will check the other stand for damage. This chain is UvrABC system protein B, found in Clostridium perfringens (strain ATCC 13124 / DSM 756 / JCM 1290 / NCIMB 6125 / NCTC 8237 / Type A).